The primary structure comprises 471 residues: Adenosylhomocysteinase (471 aa).

Substrate-binding residues include threonine 60, aspartate 135, and glutamate 196. 197 to 199 (TTT) contacts NAD(+). 2 residues coordinate substrate: lysine 226 and aspartate 230. NAD(+) is bound by residues asparagine 231, 260–265 (GYGDVG), glutamate 283, asparagine 318, 339–341 (IGH), and asparagine 387.

Belongs to the adenosylhomocysteinase family. It depends on NAD(+) as a cofactor.

The protein resides in the cytoplasm. It catalyses the reaction S-adenosyl-L-homocysteine + H2O = L-homocysteine + adenosine. Its pathway is amino-acid biosynthesis; L-homocysteine biosynthesis; L-homocysteine from S-adenosyl-L-homocysteine: step 1/1. Functionally, may play a key role in the regulation of the intracellular concentration of adenosylhomocysteine. This is Adenosylhomocysteinase from Chlorobium luteolum (strain DSM 273 / BCRC 81028 / 2530) (Pelodictyon luteolum).